Reading from the N-terminus, the 334-residue chain is Aromatic O-demethylase, reductase subunit (334 aa).

The 91-residue stretch at 1-91 folds into the 2Fe-2S ferredoxin-type domain; sequence MTFAVSVGGR…DTEVRSTADA (91 aa). [2Fe-2S] cluster contacts are provided by C35, C40, C43, and C75. Positions 98–198 constitute an FAD-binding FR-type domain; it reads LRDLTATVLE…TGPLGDFHLP (101 aa). FAD is bound by residues 145–148, 162–164, 170–172, T215, F330, and S334; these read RQYS, HVR, and VAT.

Monomer. Forms a heterodimer with GcoA. FAD is required as a cofactor. Requires [2Fe-2S] cluster as cofactor.

The enzyme catalyses 2 oxidized [cytochrome P450] + NADH = 2 reduced [cytochrome P450] + NAD(+) + H(+). It functions in the pathway aromatic compound metabolism. In terms of biological role, part of a two-component P450 system that efficiently O-demethylates diverse aromatic substrates such as guaiacol and a wide variety of lignin-derived monomers. Is likely involved in lignin degradation, allowing Amycolatopsis sp. ATCC 39116 to catabolize plant biomass. GcoB transfers electrons from NADH to the cytochrome P450 subunit GcoA. Highly prefers NADH over NADPH as the electron donor. This is Aromatic O-demethylase, reductase subunit from Amycolatopsis sp. (strain ATCC 39116 / 75iv2).